The primary structure comprises 410 residues: MSSDPNFSLISFLECLNEIEHEFLRDKGENYPVLVRKLRELQQKIPNDIANLPRDPETIQQIHQTTHRIRAVAQAFIRFDQKFVSLCSEVVHGTSKVMQEFNVVSPDVGCRNLSEDLPAYHMRKHFLLTLDNPYPTQEEKETLVRLTNESTARVGQSSVNRPPLEVHQLTLWFINARRRSGWSHILKKFAREDRSRMKHLVRAKLSSSNQSTPPSSTSDSLSNNLDDVLSDNLGRPLTPVDKQQFEDDWASMISWIKYGVKEKVGDWVYDLCAASKKTPKPGMPRPVTTVAKRHPARKTKPAAKPKSRTANPRASTTPSIDSTLDSSKLESTPELSMCSTADTSFSTFGSSLSMSHYNPFQDGNDILQSPTVKARGNRKVKALPKRAGKQQPDEVDNGKIPFLCLSVAFV.

Residues 1-110 (MSSDPNFSLI…FNVVSPDVGC (110 aa)) are variable domain between B alleles. Positions 107–184 (DVGCRNLSED…NARRRSGWSH (78 aa)) form a DNA-binding region, homeobox; TALE-type. A highly conserved between B alleles region spans residues 111–410 (RNLSEDLPAY…PFLCLSVAFV (300 aa)). 3 disordered regions span residues 202 to 239 (RAKL…PLTP), 278 to 335 (TPKP…TPEL), and 374 to 395 (ARGN…PDEV). A compositionally biased stretch (low complexity) spans 205 to 233 (LSSSNQSTPPSSTSDSLSNNLDDVLSDNL). Residues 276–308 (KKTPKPGMPRPVTTVAKRHPARKTKPAAKPKSR) carry the Nuclear localization signal motif. Positions 291 to 307 (AKRHPARKTKPAAKPKS) are enriched in basic residues. Polar residues predominate over residues 312-335 (PRASTTPSIDSTLDSSKLESTPEL). A not essential for B1 function region spans residues 333 to 410 (PELSMCSTAD…PFLCLSVAFV (78 aa)). A compositionally biased stretch (basic residues) spans 375–388 (RGNRKVKALPKRAG).

It belongs to the TALE/M-ATYP homeobox family.

Its subcellular location is the nucleus. The B locus has at least 25 alleles, and any combination of two different B alleles yields a multimeric regulatory protein, that activates genes responsible for the pathogenicity and for the sexual development of the fungus within the corn plant. This Mycosarcoma maydis (Corn smut fungus) protein is Mating-type locus allele B1 protein.